Here is a 552-residue protein sequence, read N- to C-terminus: Glutamate--tRNA ligase (552 aa).

Positions 102–112 (PNPSGPLHIGH) match the 'HIGH' region motif.

The protein belongs to the class-I aminoacyl-tRNA synthetase family. Glutamate--tRNA ligase type 2 subfamily.

Its subcellular location is the cytoplasm. The enzyme catalyses tRNA(Glu) + L-glutamate + ATP = L-glutamyl-tRNA(Glu) + AMP + diphosphate. In terms of biological role, catalyzes the attachment of glutamate to tRNA(Glu) in a two-step reaction: glutamate is first activated by ATP to form Glu-AMP and then transferred to the acceptor end of tRNA(Glu). The protein is Glutamate--tRNA ligase of Methanothermobacter marburgensis (strain ATCC BAA-927 / DSM 2133 / JCM 14651 / NBRC 100331 / OCM 82 / Marburg) (Methanobacterium thermoautotrophicum).